A 360-amino-acid polypeptide reads, in one-letter code: Biotin synthase (360 aa).

Positions 1–25 (MQHAPLNFVPDAAKVPPTPGQSPNA) are disordered. A Radical SAM core domain is found at 58 to 285 (NAVQLSTLLS…KAMVRLSAGR (228 aa)). [4Fe-4S] cluster contacts are provided by C73, C77, and C80. [2Fe-2S] cluster-binding residues include C117, C148, C208, and R280. The tract at residues 340–360 (QAEGAQHSHSSHCHIDITPAD) is disordered.

This sequence belongs to the radical SAM superfamily. Biotin synthase family. Homodimer. [4Fe-4S] cluster serves as cofactor. The cofactor is [2Fe-2S] cluster.

It carries out the reaction (4R,5S)-dethiobiotin + (sulfur carrier)-SH + 2 reduced [2Fe-2S]-[ferredoxin] + 2 S-adenosyl-L-methionine = (sulfur carrier)-H + biotin + 2 5'-deoxyadenosine + 2 L-methionine + 2 oxidized [2Fe-2S]-[ferredoxin]. It participates in cofactor biosynthesis; biotin biosynthesis; biotin from 7,8-diaminononanoate: step 2/2. In terms of biological role, catalyzes the conversion of dethiobiotin (DTB) to biotin by the insertion of a sulfur atom into dethiobiotin via a radical-based mechanism. The protein is Biotin synthase of Ralstonia nicotianae (strain ATCC BAA-1114 / GMI1000) (Ralstonia solanacearum).